The primary structure comprises 91 residues: Small ribosomal subunit protein uS19 (91 aa).

It belongs to the universal ribosomal protein uS19 family.

Protein S19 forms a complex with S13 that binds strongly to the 16S ribosomal RNA. The sequence is that of Small ribosomal subunit protein uS19 from Janthinobacterium sp. (strain Marseille) (Minibacterium massiliensis).